Consider the following 110-residue polypeptide: UPF0060 membrane protein Dtpsy_1668 (110 aa).

Transmembrane regions (helical) follow at residues 7-27, 33-53, 63-83, and 86-106; these read LALF…PWLW, SAWL…LLTL, AAYG…VDGV, and GPWD…IAFA.

Belongs to the UPF0060 family.

It is found in the cell inner membrane. The polypeptide is UPF0060 membrane protein Dtpsy_1668 (Acidovorax ebreus (strain TPSY) (Diaphorobacter sp. (strain TPSY))).